The primary structure comprises 97 residues: DNA-binding protein HU (97 aa).

Belongs to the bacterial histone-like protein family. As to quaternary structure, has been isolated in complexes with 5S rRNA and bL25, and with 5S rRNA, bL25 and uL5. Homodimer.

In terms of biological role, histone-like DNA-binding protein which is capable of wrapping DNA to stabilize it, and thus to prevent its denaturation under extreme environmental conditions. The polypeptide is DNA-binding protein HU (Thermus thermophilus (strain ATCC 27634 / DSM 579 / HB8)).